Reading from the N-terminus, the 738-residue chain is Protein Aster-B (738 aa).

The tract at residues 1–81 is disordered; it reads MKGFKLSCTA…SGGKNSKKSQ (81 aa). Positions 8-19 are enriched in polar residues; sequence CTASNSNRSTPA. Residues Ser-28 and Ser-30 each carry the phosphoserine modification. The segment covering 41 to 51 has biased composition (basic and acidic residues); the sequence is MVEKGSDHSSD. Residues 59 to 70 are compositionally biased toward low complexity; that stretch reads QGVQRSCSSQSG. Residues 96-163 form the GRAM domain; that stretch reads EDFRKLFKQL…KDICSMTKEK (68 aa). Positions 254-301 are disordered; the sequence is EENEVNDSSSKSSIETKPDASPQLPKKSITNSTLTSTGSSEAPVSFDG. Positions 259–268 are enriched in polar residues; it reads NDSSSKSSIE. Ser-274 carries the phosphoserine modification. Polar residues predominate over residues 281 to 295; it reads SITNSTLTSTGSSEA. In terms of domain architecture, VASt spans 372–543; it reads SGRQYVNEVF…ELAKTESTYL (172 aa). At Tyr-389 the chain carries Phosphotyrosine. The interval 544-566 is disordered; the sequence is AEMHRQSPKEKASKTTTVRRRKR. A compositionally biased stretch (basic and acidic residues) spans 545-556; sequence EMHRQSPKEKAS. Ser-550 and Ser-581 each carry phosphoserine. Residues Thr-584, Thr-585, and Thr-587 each carry the phosphothreonine modification. Residues 623–643 form a helical membrane-spanning segment; sequence LLLVISCVICFSLVLLVILNM.

Its subcellular location is the endoplasmic reticulum membrane. It is found in the cell membrane. Functionally, cholesterol transporter that mediates non-vesicular transport of cholesterol from the plasma membrane (PM) to the endoplasmic reticulum (ER). Contains unique domains for binding cholesterol and the PM, thereby serving as a molecular bridge for the transfer of cholesterol from the PM to the ER. Plays a crucial role in cholesterol homeostasis in the adrenal gland and has the unique ability to localize to the PM based on the level of membrane cholesterol. In lipid-poor conditions localizes to the ER membrane and in response to excess cholesterol in the PM is recruited to the endoplasmic reticulum-plasma membrane contact sites (EPCS) which is mediated by the GRAM domain. At the EPCS, the sterol-binding VASt/ASTER domain binds to the cholesterol in the PM and facilitates its transfer from the PM to ER. In Homo sapiens (Human), this protein is Protein Aster-B (GRAMD1B).